Here is a 404-residue protein sequence, read N- to C-terminus: Sorting nexin-5 (404 aa).

N-acetylalanine is present on alanine 2. The PX domain maps to 25–172; the sequence is LNVDPSLQID…HVFLEYDQDL (148 aa). A 1,2-diacyl-sn-glycero-3-phospho-(1D-myo-inositol-4,5-bisphosphate) is bound by residues 40–46, 99–105, and 113–116; these read SERDKVK, FDGPREK, and EGSM. The interaction with DOCK1 stretch occupies residues 169-261; that stretch reads DQDLSVRRKN…HSLALEEPTV (93 aa). Positions 183 to 200 are membrane-binding amphipathic helix; that stretch reads FGGFFKSVVKSADEVLFT. Position 193 is a phosphoserine (serine 193). Positions 202–404 constitute a BAR domain; it reads VKEVDDFFEQ…QSCIDLFKNN (203 aa). Residue lysine 275 is modified to N6-acetyllysine.

Belongs to the sorting nexin family. Forms heterodimers with BAR domain-containing sorting nexins SNX1 and SNX2; does not homodimerize. The heterodimers are proposed to self-assemble into helical arrays on the membrane to stabilize and expand local membrane curvature underlying endosomal tubule formation. Thought to be a component of the originally described retromer complex (also called SNX-BAR retromer) which is a pentamer containing the heterotrimeric retromer cargo-selective complex (CSC), also described as vacuolar protein sorting subcomplex (VPS), and a heterodimeric membrane-deforming subcomplex formed between SNX1 or SNX2 and SNX5 or SNX6 (also called SNX-BAR subcomplex); the respective CSC and SNX-BAR subcomplexes associate with low affinity. Interacts with SNX1, SNX2, VPS26A, VPS29, VPS35, DCTN1, DOCK1, MIB1, PIP5K1C isoform 3. Interacts with HGS; increased by PIP5K1C isoform 3 kinase activity and by PtdIns(3P) and/or PtdIns(3,4)P2. As to quaternary structure, (Microbial infection) Interacts with human cytomegalovirus proteins UL35 and UL35A; these interactions inhibit the ability of USP7 to form nuclear bodies.

Its subcellular location is the endosome. It is found in the early endosome. The protein resides in the early endosome membrane. The protein localises to the cell membrane. It localises to the cytoplasmic vesicle membrane. Its subcellular location is the cytoplasm. It is found in the cell projection. The protein resides in the phagocytic cup. The protein localises to the ruffle. Involved in several stages of intracellular trafficking. Interacts with membranes containing phosphatidylinositol 3-phosphate (PtdIns(3P)) or phosphatidylinositol 3,4-bisphosphate (PtdIns(3,4)P2). Acts in part as component of the retromer membrane-deforming SNX-BAR subcomplex. The SNX-BAR retromer mediates retrograde transport of cargo proteins from endosomes to the trans-Golgi network (TGN) and is involved in endosome-to-plasma membrane transport for cargo protein recycling. The SNX-BAR subcomplex functions to deform the donor membrane into a tubular profile called endosome-to-TGN transport carrier (ETC). Does not have in vitro vesicle-to-membrane remodeling activity. Involved in retrograde transport of lysosomal enzyme receptor IGF2R. May function as link between endosomal transport vesicles and dynactin. Plays a role in the internalization of EGFR after EGF stimulation. Involved in EGFR endosomal sorting and degradation; the function involves PIP5K1C isoform 3 and is retromer-independent. Together with PIP5K1C isoform 3 facilitates HGS interaction with ubiquitinated EGFR, which initiates EGFR sorting to intraluminal vesicles (ILVs) of the multivesicular body for subsequent lysosomal degradation. Involved in E-cadherin sorting and degradation; inhibits PIP5K1C isoform 3-mediated E-cadherin degradation. Plays a role in macropinocytosis. This is Sorting nexin-5 (SNX5) from Homo sapiens (Human).